Here is a 915-residue protein sequence, read N- to C-terminus: Protein translocase subunit SecA (915 aa).

ATP contacts are provided by residues Q87, 105–109 (GEGKT), and D512. Residues 881–915 (LPGTAPVRPEPKIGRNEPCPCGSGKKYKHCHGQLN) are disordered. Zn(2+) contacts are provided by C899, C901, C910, and H911. Positions 905-915 (KKYKHCHGQLN) are enriched in basic residues.

This sequence belongs to the SecA family. As to quaternary structure, monomer and homodimer. Part of the essential Sec protein translocation apparatus which comprises SecA, SecYEG and auxiliary proteins SecDF-YajC and YidC. The cofactor is Zn(2+).

It localises to the cell inner membrane. It is found in the cytoplasm. The catalysed reaction is ATP + H2O + cellular proteinSide 1 = ADP + phosphate + cellular proteinSide 2.. Functionally, part of the Sec protein translocase complex. Interacts with the SecYEG preprotein conducting channel. Has a central role in coupling the hydrolysis of ATP to the transfer of proteins into and across the cell membrane, serving both as a receptor for the preprotein-SecB complex and as an ATP-driven molecular motor driving the stepwise translocation of polypeptide chains across the membrane. This is Protein translocase subunit SecA from Azotobacter vinelandii (strain DJ / ATCC BAA-1303).